Consider the following 158-residue polypeptide: Protein Smg homolog (158 aa).

It belongs to the Smg family.

This is Protein Smg homolog from Vibrio cholerae serotype O1 (strain ATCC 39315 / El Tor Inaba N16961).